The primary structure comprises 465 residues: Adenosine 3'-phospho 5'-phosphosulfate transporter 1 (465 aa).

The next 10 membrane-spanning stretches (helical) occupy residues 13-33 (LVIC…SDLL), 61-81 (FLKL…GFLI), 142-162 (AVQL…WGVL), 185-205 (QFLV…YLQW), 270-290 (SYEY…MSGS), 299-319 (VTTL…SFTA), 339-359 (GVNL…GGFM), 370-390 (KFVF…LFIY), 391-407 (HTID…IMTL), and 424-444 (ISLL…LRVY).

The protein belongs to the nucleotide-sugar transporter family. SLC35B subfamily. As to expression, expressed throughout embryogenesis. During oogenesis, it is expressed strongly in the nurse cells of the germline. Maternally expressed at the syncytial blastoderm stage. Zygotically expressed, from after germ-band elongation in the invaginating salivary gland placodes. Remains expressed predominantly in this tissue throughout embryogenesis, but low-level expression may also be present throughout the embryo.

The protein localises to the golgi apparatus membrane. In terms of biological role, mediates the transport of adenosine 3'-phospho 5'-phosphosulfate (PAPS), from cytosol into Golgi. PAPS is a universal sulfuryl donor for sulfation events that take place in the Golgi. Required for the dorsoventral patterning, suggesting that it mediates the transport of the sulfate donor required for the sulfotransferase activity of pip (pipe). The protein is Adenosine 3'-phospho 5'-phosphosulfate transporter 1 (sll) of Drosophila melanogaster (Fruit fly).